An 868-amino-acid chain; its full sequence is Protein translocase subunit SecA (868 aa).

Residues Gln-88, 106–110, and Asp-509 each bind ATP; that span reads GEGKT. The span at 816 to 827 shows a compositional bias: polar residues; it reads NAENEPLNYNNQ. Residues 816-868 form a disordered region; that stretch reads NAENEPLNYNNQGEDENFTPEKKIPRNAPCPCGSGKKYKDCHGKSGPKKGIFA. Zn(2+)-binding residues include Cys-845, Cys-847, Cys-856, and His-857.

This sequence belongs to the SecA family. As to quaternary structure, monomer and homodimer. Part of the essential Sec protein translocation apparatus which comprises SecA, SecYEG and auxiliary proteins SecDF-YajC and YidC. The cofactor is Zn(2+).

Its subcellular location is the cell inner membrane. It is found in the cytoplasm. The catalysed reaction is ATP + H2O + cellular proteinSide 1 = ADP + phosphate + cellular proteinSide 2.. Functionally, part of the Sec protein translocase complex. Interacts with the SecYEG preprotein conducting channel. Has a central role in coupling the hydrolysis of ATP to the transfer of proteins into and across the cell membrane, serving as an ATP-driven molecular motor driving the stepwise translocation of polypeptide chains across the membrane. The polypeptide is Protein translocase subunit SecA (Campylobacter concisus (strain 13826)).